The primary structure comprises 906 residues: MASLGAFAKRLFGSSNDRRIKAYKARVEAINALEPDMIALSDDALRGKTAEFRARLADGAVLDELLPEAFAVVREAAKRSLGQRHYDVQLIGGMVLNDGNIAEMKTGEGKTLVSTLAAYLNALTGKGVHVVTVNDYLAKRDADWMGQIFRFLGLEVGVVLHGLDDNQRRAAYAADITYGTNNEYGFDYLRDNMKYQLASMVQRGHGFAIVDEVDSILIDEARTPLIISGPLDDKSDLYLSIDEVIPEIGEEDYELDEKQRTVNLTEEGNERVEEILRNRGIMLEGNLYDIENISIVHHVNNALRAHKLFQKDKDYIVKTGKVVIIDEFTGRMMEGRRYSDGLHQALEAKERVPIQPENQTLASITFQNYFRMYEKLSGMTGTALTEASEFGDIYGLDVLEIPTNKPIARIDEDDEVYRTTREKYEAMIGEIEECASRGQPVLVGTTSIEKSETLSELLKKKKVKHKVLNARYHEQEAHIVAQAGVPGNVTIATNMAGRGTDIQLGGNLDMRLADETAGIENEAELARKTAEVKADIEAKKQRALEAGGLYVIGTERHESRRIDNQLRGRSGRQGDPGRSKFYLSLEDDLMRIFGTDRMDGMLQKLGLQEGEAIVHPWINKALEKAQQKVEARNFDIRKNLLKFDNVMNDQRRAIFEQRIELMRAEDVSDTVDDMRRQVIDDMVAAHVPEKAYAEQWDMAGLKEEVKKNLDLDLPIETWADEEGIAEEEIRERLYSASDRHMASKAAQVGPDLMRQVEKAVLLQTLDQHWREHLMMLDHLRQAVGLRGYAQRDPLNEYKSEAFELFESLLARLRENVTRQLSVAQFITEAPRIEEQPLPEMQAHHTNPLTGEDEMADGDVATMQRPMRNDPGVAADPNDPRTWGKTPRNAPCPCGSGKKYKHCHGAL.

ATP is bound by residues glutamine 89, 107–111 (GEGKT), and aspartate 501. The Zn(2+) site is built by cysteine 891, cysteine 893, cysteine 902, and histidine 903.

This sequence belongs to the SecA family. As to quaternary structure, monomer and homodimer. Part of the essential Sec protein translocation apparatus which comprises SecA, SecYEG and auxiliary proteins SecDF-YajC and YidC. Zn(2+) is required as a cofactor.

The protein localises to the cell inner membrane. It is found in the cytoplasm. The enzyme catalyses ATP + H2O + cellular proteinSide 1 = ADP + phosphate + cellular proteinSide 2.. Functionally, part of the Sec protein translocase complex. Interacts with the SecYEG preprotein conducting channel. Has a central role in coupling the hydrolysis of ATP to the transfer of proteins into and across the cell membrane, serving both as a receptor for the preprotein-SecB complex and as an ATP-driven molecular motor driving the stepwise translocation of polypeptide chains across the membrane. The sequence is that of Protein translocase subunit SecA from Parvibaculum lavamentivorans (strain DS-1 / DSM 13023 / NCIMB 13966).